Consider the following 120-residue polypeptide: Small ribosomal subunit protein uS13 (120 aa).

The interval 96–120 (PCRGQRTRTNARTRKGPRKAIAGKK) is disordered.

Belongs to the universal ribosomal protein uS13 family. As to quaternary structure, part of the 30S ribosomal subunit. Forms a loose heterodimer with protein S19. Forms two bridges to the 50S subunit in the 70S ribosome.

Located at the top of the head of the 30S subunit, it contacts several helices of the 16S rRNA. In the 70S ribosome it contacts the 23S rRNA (bridge B1a) and protein L5 of the 50S subunit (bridge B1b), connecting the 2 subunits; these bridges are implicated in subunit movement. Contacts the tRNAs in the A and P-sites. The polypeptide is Small ribosomal subunit protein uS13 (Chromobacterium violaceum (strain ATCC 12472 / DSM 30191 / JCM 1249 / CCUG 213 / NBRC 12614 / NCIMB 9131 / NCTC 9757 / MK)).